Consider the following 536-residue polypeptide: Light-independent protochlorophyllide reductase subunit B (536 aa).

Asp-36 lines the [4Fe-4S] cluster pocket. The active-site Proton donor is the Asp-292. 427-428 (GL) lines the substrate pocket. The segment at 447-489 (QSHLGHLGGHQSQTEQQQSQAATNPSTQSNTDSSSEESPLWTP) is disordered. Positions 448 to 469 (SHLGHLGGHQSQTEQQQSQAAT) are enriched in low complexity. Positions 470–483 (NPSTQSNTDSSSEE) are enriched in polar residues.

This sequence belongs to the ChlB/BchB/BchZ family. In terms of assembly, protochlorophyllide reductase is composed of three subunits; ChlL, ChlN and ChlB. Forms a heterotetramer of two ChlB and two ChlN subunits. The cofactor is [4Fe-4S] cluster.

The enzyme catalyses chlorophyllide a + oxidized 2[4Fe-4S]-[ferredoxin] + 2 ADP + 2 phosphate = protochlorophyllide a + reduced 2[4Fe-4S]-[ferredoxin] + 2 ATP + 2 H2O. The protein operates within porphyrin-containing compound metabolism; chlorophyll biosynthesis (light-independent). Component of the dark-operative protochlorophyllide reductase (DPOR) that uses Mg-ATP and reduced ferredoxin to reduce ring D of protochlorophyllide (Pchlide) to form chlorophyllide a (Chlide). This reaction is light-independent. The NB-protein (ChlN-ChlB) is the catalytic component of the complex. The sequence is that of Light-independent protochlorophyllide reductase subunit B from Prochlorococcus marinus (strain MIT 9303).